A 286-amino-acid chain; its full sequence is NAD kinase (286 aa).

Asp-74 (proton acceptor) is an active-site residue. NAD(+)-binding positions include 74 to 75, 148 to 149, Asp-178, Ala-186, 189 to 194, and Gln-244; these read DG, ND, and TAYNLS.

This sequence belongs to the NAD kinase family. It depends on a divalent metal cation as a cofactor.

The protein resides in the cytoplasm. It catalyses the reaction NAD(+) + ATP = ADP + NADP(+) + H(+). In terms of biological role, involved in the regulation of the intracellular balance of NAD and NADP, and is a key enzyme in the biosynthesis of NADP. Catalyzes specifically the phosphorylation on 2'-hydroxyl of the adenosine moiety of NAD to yield NADP. The chain is NAD kinase from Campylobacter jejuni subsp. jejuni serotype O:6 (strain 81116 / NCTC 11828).